A 121-amino-acid chain; its full sequence is Large ribosomal subunit protein bL12 (121 aa).

The protein belongs to the bacterial ribosomal protein bL12 family. As to quaternary structure, homodimer. Part of the ribosomal stalk of the 50S ribosomal subunit. Forms a multimeric L10(L12)X complex, where L10 forms an elongated spine to which 2 to 4 L12 dimers bind in a sequential fashion. Binds GTP-bound translation factors.

In terms of biological role, forms part of the ribosomal stalk which helps the ribosome interact with GTP-bound translation factors. Is thus essential for accurate translation. This is Large ribosomal subunit protein bL12 from Alkaliphilus oremlandii (strain OhILAs) (Clostridium oremlandii (strain OhILAs)).